A 388-amino-acid chain; its full sequence is Arginine biosynthesis bifunctional protein ArgJ (388 aa).

Substrate-binding residues include Thr-150, Lys-172, Thr-183, Glu-263, Asn-383, and Ser-388. Thr-183 acts as the Nucleophile in catalysis.

This sequence belongs to the ArgJ family. As to quaternary structure, heterotetramer of two alpha and two beta chains.

It is found in the cytoplasm. It catalyses the reaction N(2)-acetyl-L-ornithine + L-glutamate = N-acetyl-L-glutamate + L-ornithine. The catalysed reaction is L-glutamate + acetyl-CoA = N-acetyl-L-glutamate + CoA + H(+). It participates in amino-acid biosynthesis; L-arginine biosynthesis; L-ornithine and N-acetyl-L-glutamate from L-glutamate and N(2)-acetyl-L-ornithine (cyclic): step 1/1. The protein operates within amino-acid biosynthesis; L-arginine biosynthesis; N(2)-acetyl-L-ornithine from L-glutamate: step 1/4. In terms of biological role, catalyzes two activities which are involved in the cyclic version of arginine biosynthesis: the synthesis of N-acetylglutamate from glutamate and acetyl-CoA as the acetyl donor, and of ornithine by transacetylation between N(2)-acetylornithine and glutamate. The polypeptide is Arginine biosynthesis bifunctional protein ArgJ (Corynebacterium glutamicum (strain ATCC 13032 / DSM 20300 / JCM 1318 / BCRC 11384 / CCUG 27702 / LMG 3730 / NBRC 12168 / NCIMB 10025 / NRRL B-2784 / 534)).